The following is a 29-amino-acid chain: Bacteriocin (29 aa).

It localises to the secreted. In terms of biological role, has antibacterial activity against strains of L.monocytogenes, L.lactis, B.subtilis, S.typhi, S.aureus, C.perfringens, E.aerogenes and M.luteus but not against E.coli, S.sonnei, S.pneumoniae, S.faecalis, P.aeruginosa, K.pneumoniae or P.vulgaris. The polypeptide is Bacteriocin (Lactococcus lactis subsp. lactis (Streptococcus lactis)).